We begin with the raw amino-acid sequence, 478 residues long: Glutamate--tRNA ligase (478 aa).

Positions 9 to 19 (PSPTGLLHIGT) match the 'HIGH' region motif. Positions 248-252 (KLSKR) match the 'KMSKS' region motif. Lysine 251 provides a ligand contact to ATP.

This sequence belongs to the class-I aminoacyl-tRNA synthetase family. Glutamate--tRNA ligase type 1 subfamily. Monomer.

It localises to the cytoplasm. It carries out the reaction tRNA(Glu) + L-glutamate + ATP = L-glutamyl-tRNA(Glu) + AMP + diphosphate. Functionally, catalyzes the attachment of glutamate to tRNA(Glu) in a two-step reaction: glutamate is first activated by ATP to form Glu-AMP and then transferred to the acceptor end of tRNA(Glu). In Prochlorococcus marinus (strain MIT 9515), this protein is Glutamate--tRNA ligase.